The chain runs to 1025 residues: Adenylate-forming reductase 03009 (1025 aa).

The segment at Phe-38 to Ile-422 is adenylation (A) domain. AMP contacts are provided by residues Val-332–Thr-333 and His-412–Arg-415. The tract at residues Ser-556–Lys-638 is thiolation and peptide carrier (T) domain. The thioester reductase (TR) domain stretch occupies residues Phe-682–Val-900. NADP(+) contacts are provided by residues Arg-685 to Ala-688, Ser-769 to Leu-771, and Tyr-840.

Belongs to the adenylate-forming reductase family.

In terms of biological role, adenylate-forming reductase, a natural product biosynthesis enzyme that resembles non-ribosomal peptide synthetases, yet serves to modify one substrate, rather than to condense two or more building blocks. The A-domain preferentially accepts L-serine, L-alanine and L-valine as substrates. The natural product of the enzyme is not yet known. The chain is Adenylate-forming reductase 03009 from Coprinopsis cinerea (strain Okayama-7 / 130 / ATCC MYA-4618 / FGSC 9003) (Inky cap fungus).